Reading from the N-terminus, the 1110-residue chain is cGMP-specific 3',5'-cyclic phosphodiesterase (1110 aa).

Low complexity-rich tracts occupy residues 1–25 (MTDV…SSAS) and 35–55 (TSTA…ASGA). Disordered stretches follow at residues 1–55 (MTDV…ASGA), 67–128 (ISNQ…QQDV), and 184–203 (ASPT…SASS). Positions 88 to 103 (APYPPVPAAKPKPTPT) are enriched in pro residues. Over residues 192-203 (SPRSLSNSSASS) the composition is skewed to low complexity. GAF domains lie at 233–385 (DIDV…GIGI) and 417–601 (NLEC…GLGI). In terms of domain architecture, PDEase spans 631 to 954 (SQDQTEKLTQ…RNWQDLAEKV (324 aa)). H707 functions as the Proton donor in the catalytic mechanism. A divalent metal cation is bound by residues H711, H747, D748, and D858. Disordered stretches follow at residues 997 to 1028 (AQHG…TGAL) and 1040 to 1110 (LYNS…CSLL). Basic and acidic residues-rich tracts occupy residues 1006 to 1015 (DDSHTPEHQR) and 1056 to 1068 (LESH…DDKS). Over residues 1082–1097 (GRMSASSSTSSAGTVV) the composition is skewed to low complexity. Positions 1100 to 1110 (SKKRSKLCSLL) are enriched in basic residues. At C1107 the chain carries Cysteine methyl ester. A lipid anchor (S-farnesyl cysteine) is attached at C1107. Positions 1108 to 1110 (SLL) are cleaved as a propeptide — removed in mature form.

This sequence belongs to the cyclic nucleotide phosphodiesterase family. Interacts with PrBP. The cofactor is a divalent metal cation.

It localises to the cell membrane. It carries out the reaction 3',5'-cyclic GMP + H2O = GMP + H(+). In terms of biological role, has a role regulating cGMP transport in Malpighian tubule principal cells. The protein is cGMP-specific 3',5'-cyclic phosphodiesterase of Drosophila pseudoobscura pseudoobscura (Fruit fly).